The following is a 302-amino-acid chain: 4-hydroxy-tetrahydrodipicolinate synthase (302 aa).

Residue T55 coordinates pyruvate. The active-site Proton donor/acceptor is Y144. K172 serves as the catalytic Schiff-base intermediate with substrate. V214 contacts pyruvate.

Belongs to the DapA family. Homotetramer; dimer of dimers.

Its subcellular location is the cytoplasm. The enzyme catalyses L-aspartate 4-semialdehyde + pyruvate = (2S,4S)-4-hydroxy-2,3,4,5-tetrahydrodipicolinate + H2O + H(+). It functions in the pathway amino-acid biosynthesis; L-lysine biosynthesis via DAP pathway; (S)-tetrahydrodipicolinate from L-aspartate: step 3/4. In terms of biological role, catalyzes the condensation of (S)-aspartate-beta-semialdehyde [(S)-ASA] and pyruvate to 4-hydroxy-tetrahydrodipicolinate (HTPA). The polypeptide is 4-hydroxy-tetrahydrodipicolinate synthase (Synechococcus sp. (strain WH7803)).